The following is a 492-amino-acid chain: Ketol-acid reductoisomerase (NADP(+)) (492 aa).

The 192-residue stretch at 17-208 (LGQCRLMKKN…GSNKAGVLES (192 aa)) folds into the KARI N-terminal Rossmann domain. Residues 45 to 48 (CGSQ), Arg68, Ser76, and Ser78 contribute to the NADP(+) site. Residue His132 is part of the active site. Gly158 lines the NADP(+) pocket. KARI C-terminal knotted domains lie at 209 to 344 (SFVA…KAPV) and 345 to 487 (YCET…MKDM). Mg(2+)-binding residues include Asp217, Glu221, Glu389, and Glu393. Ser414 contributes to the substrate binding site.

The protein belongs to the ketol-acid reductoisomerase family. It depends on Mg(2+) as a cofactor.

The enzyme catalyses (2R)-2,3-dihydroxy-3-methylbutanoate + NADP(+) = (2S)-2-acetolactate + NADPH + H(+). The catalysed reaction is (2R,3R)-2,3-dihydroxy-3-methylpentanoate + NADP(+) = (S)-2-ethyl-2-hydroxy-3-oxobutanoate + NADPH + H(+). Its pathway is amino-acid biosynthesis; L-isoleucine biosynthesis; L-isoleucine from 2-oxobutanoate: step 2/4. It functions in the pathway amino-acid biosynthesis; L-valine biosynthesis; L-valine from pyruvate: step 2/4. Its function is as follows. Involved in the biosynthesis of branched-chain amino acids (BCAA). Catalyzes an alkyl-migration followed by a ketol-acid reduction of (S)-2-acetolactate (S2AL) to yield (R)-2,3-dihydroxy-isovalerate. In the isomerase reaction, S2AL is rearranged via a Mg-dependent methyl migration to produce 3-hydroxy-3-methyl-2-ketobutyrate (HMKB). In the reductase reaction, this 2-ketoacid undergoes a metal-dependent reduction by NADPH to yield (R)-2,3-dihydroxy-isovalerate. This chain is Ketol-acid reductoisomerase (NADP(+)), found in Blochmanniella floridana.